The following is a 405-amino-acid chain: DNA primase DnaG (405 aa).

The 77-residue stretch at 172–248 (DAIIIVEGRA…HVDYIARAPP (77 aa)) folds into the Toprim domain. Residues Glu178, Asp222, and Asp224 each coordinate Mg(2+). The interval 279–303 (ASGERAEAPPQPAQQPQQEQPAPQR) is disordered. A compositionally biased stretch (low complexity) spans 292–303 (QQPQQEQPAPQR).

Belongs to the archaeal DnaG primase family. As to quaternary structure, forms a ternary complex with MCM helicase and DNA. Component of the archaeal exosome complex. The cofactor is Mg(2+).

It catalyses the reaction ssDNA + n NTP = ssDNA/pppN(pN)n-1 hybrid + (n-1) diphosphate.. Functionally, RNA polymerase that catalyzes the synthesis of short RNA molecules used as primers for DNA polymerase during DNA replication. Also part of the exosome, which is a complex involved in RNA degradation. Acts as a poly(A)-binding protein that enhances the interaction between heteromeric, adenine-rich transcripts and the exosome. The polypeptide is DNA primase DnaG (Pyrobaculum arsenaticum (strain DSM 13514 / JCM 11321 / PZ6)).